Reading from the N-terminus, the 637-residue chain is Phosphomethylpyrimidine synthase (637 aa).

Substrate-binding positions include Asn-242, Met-271, Tyr-300, His-336, 356 to 358 (SRG), 397 to 400 (DGLR), and Glu-436. Position 440 (His-440) interacts with Zn(2+). Position 463 (Tyr-463) interacts with substrate. His-504 provides a ligand contact to Zn(2+). [4Fe-4S] cluster is bound by residues Cys-584, Cys-587, and Cys-592.

It belongs to the ThiC family. As to quaternary structure, homodimer. [4Fe-4S] cluster serves as cofactor.

It carries out the reaction 5-amino-1-(5-phospho-beta-D-ribosyl)imidazole + S-adenosyl-L-methionine = 4-amino-2-methyl-5-(phosphooxymethyl)pyrimidine + CO + 5'-deoxyadenosine + formate + L-methionine + 3 H(+). The protein operates within cofactor biosynthesis; thiamine diphosphate biosynthesis. Its function is as follows. Catalyzes the synthesis of the hydroxymethylpyrimidine phosphate (HMP-P) moiety of thiamine from aminoimidazole ribotide (AIR) in a radical S-adenosyl-L-methionine (SAM)-dependent reaction. The chain is Phosphomethylpyrimidine synthase from Bordetella bronchiseptica (strain ATCC BAA-588 / NCTC 13252 / RB50) (Alcaligenes bronchisepticus).